Here is a 372-residue protein sequence, read N- to C-terminus: Glutamate 5-kinase (372 aa).

Residue lysine 6 participates in ATP binding. Residues serine 46, aspartate 133, and asparagine 145 each coordinate substrate. ATP is bound by residues 165–166 (TD) and 207–213 (TGGMYTK). Residues 272-350 (SGRLFIDEGA…HEIEKILGYK (79 aa)) form the PUA domain.

Belongs to the glutamate 5-kinase family.

The protein localises to the cytoplasm. It carries out the reaction L-glutamate + ATP = L-glutamyl 5-phosphate + ADP. The protein operates within amino-acid biosynthesis; L-proline biosynthesis; L-glutamate 5-semialdehyde from L-glutamate: step 1/2. Its function is as follows. Catalyzes the transfer of a phosphate group to glutamate to form L-glutamate 5-phosphate. This Thermoanaerobacter pseudethanolicus (strain ATCC 33223 / 39E) (Clostridium thermohydrosulfuricum) protein is Glutamate 5-kinase.